A 494-amino-acid polypeptide reads, in one-letter code: SNF1-related protein kinase catalytic subunit alpha KIN12 (494 aa).

The Protein kinase domain occupies 19 to 270; that stretch reads YRIGKTLGHG…ITEIRQHPWF (252 aa). Residues 25–33 and K48 each bind ATP; that span reads LGHGSFAKV. D142 (proton acceptor) is an active-site residue. The residue at position 175 (T175) is a Phosphothreonine. Residues 289 to 386 are auto-inhibitory domain (AID); it reads AKKIEEEIIQ…GLKSNVKDDK (98 aa). The UBA domain occupies 291 to 331; sequence KIEEEIIQNVVNIGFDRNHVVDSLANRIQNEATVAYHLILD. A regulatory domain (RD) region spans residues 293–494; that stretch reads EEEIIQNVVN…VAFLRELGVL (202 aa). The interval 387-494 is PPI; that stretch reads TWTLGLQSQG…VAFLRELGVL (108 aa). The 49-residue stretch at 445 to 493 folds into the KA1 domain; sequence AIILPTVIKFEIQLYKVREGKYLLDILRIDGPQFIFFDLCVAFLRELGV.

It belongs to the protein kinase superfamily. CAMK Ser/Thr protein kinase family. SNF1 subfamily. Subunit of a probable heterotrimeric complex consisting of an alpha catalytic subunit, and a beta (KINB) and a gamma (KING or SNF4) non-catalytic regulatory subunits. In terms of processing, autophosphorylated. Expressed at very low levels.

The catalysed reaction is L-seryl-[protein] + ATP = O-phospho-L-seryl-[protein] + ADP + H(+). The enzyme catalyses L-threonyl-[protein] + ATP = O-phospho-L-threonyl-[protein] + ADP + H(+). Its activity is regulated as follows. Activated by phosphorylation at Thr-175. Its function is as follows. Catalytic subunit of the probable trimeric SNF1-related protein kinase (SnRK) complex, a central regulator of cellular energy homeostasis, which, in response to seemingly unrelated darkness, sugar and stress conditions, activates energy-producing pathways and inhibits energy-consuming processes. May also be involved in the regulation of fatty acid synthesis by phosphorylation of acetyl-CoA carboxylase and in assimilation of nitrogen by phosphorylating nitrate reductase. In Arabidopsis thaliana (Mouse-ear cress), this protein is SNF1-related protein kinase catalytic subunit alpha KIN12.